A 296-amino-acid chain; its full sequence is Cytochrome bc1 complex cytochrome c subunit (296 aa).

The span at 1–19 (MMETNPQTSEGAGKAQSSA) shows a compositional bias: polar residues. The disordered stretch occupies residues 1-27 (MMETNPQTSEGAGKAQSSAKKVKNRRK). Residues 32 to 52 (VAGAMALTIGLSGAGILATAI) form a helical membrane-spanning segment. Cytochrome c domains are found at residues 67 to 147 (ALIA…AANG) and 177 to 255 (LDVS…KSTK). Heme c-binding residues include Cys80, Cys83, His84, Cys190, Cys193, and His194. Residues 274-294 (GLFMWGIGIMVLIAAAMWIGS) form a helical membrane-spanning segment.

The cytochrome bc1 complex is composed of a cytochrome b (QcrB), the Rieske iron-sulfur protein (QcrA) and a diheme cytochrome c (QcrC) subunit. The bc1 complex forms a supercomplex with cytochrome c oxidase (cytochrome aa3). Binds 2 heme c groups covalently per subunit.

It is found in the cell membrane. The catalysed reaction is a quinol + 2 Fe(III)-[cytochrome c](out) = a quinone + 2 Fe(II)-[cytochrome c](out) + 2 H(+)(out). Its function is as follows. Cytochrome c1 subunit of the cytochrome bc1 complex, an essential component of the respiratory electron transport chain required for ATP synthesis. The bc1 complex catalyzes the oxidation of menaquinol and the reduction of cytochrome c in the respiratory chain. The bc1 complex operates through a Q-cycle mechanism that couples electron transfer to generation of the proton gradient that drives ATP synthesis. In Corynebacterium efficiens (strain DSM 44549 / YS-314 / AJ 12310 / JCM 11189 / NBRC 100395), this protein is Cytochrome bc1 complex cytochrome c subunit (qcrC).